The chain runs to 495 residues: UDP-glycosyltransferase 73C11 (495 aa).

The Proton acceptor role is filled by His24. His24 lines the an anthocyanidin pocket. The active-site Charge relay is the Asp129. UDP-alpha-D-glucose-binding residues include Gln358, His373, Trp376, Asn377, Ser378, and Glu381. Position 396 (Gly396) interacts with an anthocyanidin. The UDP-alpha-D-glucose site is built by Asp397 and Gln398.

The protein belongs to the UDP-glycosyltransferase family.

It catalyses the reaction oleanolate + UDP-alpha-D-glucose = oleanolate 3-O-beta-D-glucoside + UDP + H(+). Catalyzes the transfer of a glucose (Glc) moiety from UDP-Glc to the C-3 position of the oleanane sapogenins oleanolate and hederagenin, and to the C-28 carboxylic group of the lupane sapogenin betulinate. The monoglucosylated hederagenin 3-O-beta-D-glucoside is a feeding deterrent of the yellow-striped flea beetle (Phyllotreta nemorum). This chain is UDP-glycosyltransferase 73C11, found in Barbarea vulgaris (Yellow rocket).